The primary structure comprises 197 residues: FMN-dependent NADH:quinone oxidoreductase (197 aa).

FMN-binding positions include Ser10, 16–18, and 96–99; these read SKS and MYNF.

It belongs to the azoreductase type 1 family. Homodimer. FMN serves as cofactor.

It carries out the reaction 2 a quinone + NADH + H(+) = 2 a 1,4-benzosemiquinone + NAD(+). The catalysed reaction is N,N-dimethyl-1,4-phenylenediamine + anthranilate + 2 NAD(+) = 2-(4-dimethylaminophenyl)diazenylbenzoate + 2 NADH + 2 H(+). Functionally, quinone reductase that provides resistance to thiol-specific stress caused by electrophilic quinones. In terms of biological role, also exhibits azoreductase activity. Catalyzes the reductive cleavage of the azo bond in aromatic azo compounds to the corresponding amines. The protein is FMN-dependent NADH:quinone oxidoreductase of Marinomonas sp. (strain MWYL1).